A 1582-amino-acid polypeptide reads, in one-letter code: Adhesion G protein-coupled receptor B1 (1582 aa).

Residues 1–33 (MRGQAAAPGPIWILAPLLLLLLLLGRWARAASG) form the signal peptide. Topologically, residues 34–948 (ADIGPGTEQC…ATMDKVTVPS (915 aa)) are extracellular. Residue N64 is glycosylated (N-linked (GlcNAc...) asparagine). One can recognise a TSP type-1 1 domain in the interval 261 to 315 (AGGWKLWSLWGECTRDCGGGLQTRTRTCLPTLGVEGGGCEGVLEEGRLCNRKACG). 3 disulfide bridges follow: C273/C309, C277/C314, and C288/C299. The interval 313–335 (ACGPTGRSSSRSQSLRSTDARRR) is disordered. Positions 319 to 329 (RSSSRSQSLRS) are enriched in low complexity. TSP type-1 domains follow at residues 354–407 (DPAA…AVCP), 409–462 (HGAW…ALCP), 467–520 (DGNW…QQCP), and 522–575 (DGKW…QRCP). 14 disulfide bridges follow: C366/C400, C370/C406, C381/C390, C421/C456, C425/C461, C436/C446, C479/C514, C483/C519, C494/C504, C534/C569, C538/C574, C549/C559, C581/C616, and C604/C634. An N-linked (GlcNAc...) asparagine glycan is attached at N401. N607 carries an N-linked (GlcNAc...) asparagine glycan. T609 carries the phosphothreonine modification. N-linked (GlcNAc...) asparagine glycosylation is found at N692, N844, N877, and N881. Residues 760–939 (RDAYQVTDNL…AILAQLSADA (180 aa)) enclose the GAIN-B domain. 2 cysteine pairs are disulfide-bonded: C884–C921 and C909–C923. The tract at residues 884-939 (CILWDETDGPSSSAPPQLGPWSWRGCRTVPLDALRTRCLCDRLSTFAILAQLSADA) is GPS. Positions 927–943 (STFAILAQLSADATMDK) are N-terminal stalk following vasculostatin-120 cleavage which is not required for signaling activity. The chain crosses the membrane as a helical span at residues 949–969 (VTLIVGCGVSSLTLLMLVIIY). The Cytoplasmic portion of the chain corresponds to 970-980 (VSVWRYIRSER). A helical transmembrane segment spans residues 981-1001 (SVILINFCLSIISSNALILIG). The Extracellular segment spans residues 1002–1008 (QTQTRNK). Residues 1009 to 1029 (VVCTLVAAFLHFFFLSSFCWV) traverse the membrane as a helical segment. The Cytoplasmic portion of the chain corresponds to 1030 to 1052 (LTEAWQSYMAVTGRLRSRLVRKR). Residues 1053-1073 (FLCLGWGLPALVVAISVGFTK) form a helical membrane-spanning segment. The Extracellular segment spans residues 1074-1093 (AKGYSTMNYCWLSLEGGLLY). The helical transmembrane segment at 1094–1114 (AFVGPAAAVVLVNMVIGILVF) threads the bilayer. Residues 1115 to 1136 (NKLVSKDGITDKKLKERAGASL) are Cytoplasmic-facing. The chain crosses the membrane as a helical span at residues 1137–1157 (WSSCVVLPLLALTWMSAVLAV). Topologically, residues 1158-1166 (TDRRSALFQ) are extracellular. A helical transmembrane segment spans residues 1167-1187 (ILFAVFDSLEGFVIVMVHCIL). The Cytoplasmic segment spans residues 1188–1582 (RREVQDAVKC…QDIIDLQTEV (395 aa)). Positions 1363–1582 (YSINIDQMPQ…QDIIDLQTEV (220 aa)) are involved in interaction with MAGI1. Residues 1382–1549 (PDASFPTRSP…AWVKKELEPL (168 aa)) are disordered. The segment covering 1389–1435 (RSPPAREPPGGAPPEVPPVQPPPPPPPPPPPPQQPIPPPPTLEPAPP) has biased composition (pro residues). Residues 1441 to 1455 (GEPAAHPGPSSGAGA) are compositionally biased toward low complexity. Phosphoserine is present on S1467. Composition is skewed to basic and acidic residues over residues 1468-1484 (LERRKSRYAELDFEKIM) and 1491-1520 (QDMFQDLNRKLQHAAEKEKEVPGADSKPEK). Positions 1579 to 1582 (QTEV) are indispensable for interaction with MAGI1.

Belongs to the G-protein coupled receptor 2 family. LN-TM7 subfamily. Interacts with ELMO1 and DOCK1. When bound to ELMO1 and DOCK1, acts as a module to promote apoptotic cell engulfment. Interacts with MDM2; the interaction results in inhibition of MDM2-mediated ubiquitination and degradation of DLG4/PSD95. Interacts with PARD3 and TIAM1; the interaction is required for correct dendritic localization of PARD3 and TIAM1 and for dendritic spine formation. Interacts with MAGI1, MAGI3 and BAIAP2. Interacts with PHYHIP. Interacts with DLG4 (via PDZ domain). Vasculostatin-120: Interacts with CD36. Vasculostatin-120: Interacts with ARRB2. Interacts with BAIAP3; this interaction is direct. In terms of processing, proteolytically cleaved to produce vasculostatin-40 and vasculostatin-120. Vasculostatin-40 is the major form and is produced through proteolytic cleavage by MMP14 between residues 321 and 329 with cleavage likely to be between Ser-326 and Leu-327. Post-translationally, ubiquitinated. In terms of tissue distribution, in brain, widespread expression in all neuropil-rich zones including spinal cord gray matter, cerebellar molecular layer, cerebral cortex, thalamic nuclei and basal ganglia with no expression in white matter (at protein level). In the cerebellar molecular layer, highly expressed in interneuron processes whereas Purkinje cells and their dendrites show weaker expression (at protein level). In the olfactory bulb, highly expressed in glomeruli (at protein level). In the retina, highly concentrated in the outer and inner plexiform layers (at protein level). Expressed in brain. Enriched in hippocampus and cortex. Also detected in other tissues including bone marrow and spleen.

It localises to the cell membrane. It is found in the cell projection. The protein resides in the phagocytic cup. Its subcellular location is the cell junction. The protein localises to the focal adhesion. It localises to the dendritic spine. It is found in the postsynaptic density. The protein resides in the secreted. Phosphatidylserine receptor which enhances the engulfment of apoptotic cells. Also mediates the binding and engulfment of Gram-negative bacteria. Stimulates production of reactive oxygen species by macrophages in response to Gram-negative bacteria, resulting in enhanced microbicidal macrophage activity. In the gastric mucosa, required for recognition and engulfment of apoptotic gastric epithelial cells. Promotes myoblast fusion. Activates the Rho pathway in a G-protein-dependent manner. Inhibits MDM2-mediated ubiquitination and degradation of DLG4/PSD95, promoting DLG4 stability and regulating synaptic plasticity. Required for the formation of dendritic spines by ensuring the correct localization of PARD3 and TIAM1. Potent inhibitor of angiogenesis in brain and may play a significant role as a mediator of the p53/TP53 signal in suppression of glioblastoma. Its function is as follows. Inhibits angiogenesis in a CD36-dependent manner. Functionally, inhibits angiogenesis. The sequence is that of Adhesion G protein-coupled receptor B1 from Mus musculus (Mouse).